The primary structure comprises 658 residues: ATP-dependent DNA helicase Rep (658 aa).

The region spanning 1–280 (MSLNFNQKNA…IKMEQNYRSY (280 aa)) is the UvrD-like helicase ATP-binding domain. Residues 22–29 (AGAGSGKT) and Arg-278 contribute to the ATP site. Residues 281-564 (GRILKAANKL…QLMTLHSSKG (284 aa)) form the UvrD-like helicase C-terminal domain.

The protein belongs to the helicase family. UvrD subfamily. In terms of assembly, homodimer.

It carries out the reaction Couples ATP hydrolysis with the unwinding of duplex DNA by translocating in the 3'-5' direction.. The catalysed reaction is ATP + H2O = ADP + phosphate + H(+). Rep helicase is a single-stranded DNA-dependent ATPase involved in DNA replication; it can initiate unwinding at a nick in the DNA. It binds to the single-stranded DNA and acts in a progressive fashion along the DNA in the 3' to 5' direction. This chain is ATP-dependent DNA helicase Rep, found in Buchnera aphidicola subsp. Schizaphis graminum (strain Sg).